Consider the following 270-residue polypeptide: Imidazole glycerol phosphate synthase subunit HisF (270 aa).

Residues D11 and D135 contribute to the active site.

The protein belongs to the HisA/HisF family. In terms of assembly, heterodimer of HisH and HisF.

The protein localises to the cytoplasm. It carries out the reaction 5-[(5-phospho-1-deoxy-D-ribulos-1-ylimino)methylamino]-1-(5-phospho-beta-D-ribosyl)imidazole-4-carboxamide + L-glutamine = D-erythro-1-(imidazol-4-yl)glycerol 3-phosphate + 5-amino-1-(5-phospho-beta-D-ribosyl)imidazole-4-carboxamide + L-glutamate + H(+). It functions in the pathway amino-acid biosynthesis; L-histidine biosynthesis; L-histidine from 5-phospho-alpha-D-ribose 1-diphosphate: step 5/9. In terms of biological role, IGPS catalyzes the conversion of PRFAR and glutamine to IGP, AICAR and glutamate. The HisF subunit catalyzes the cyclization activity that produces IGP and AICAR from PRFAR using the ammonia provided by the HisH subunit. This is Imidazole glycerol phosphate synthase subunit HisF from Haloquadratum walsbyi (strain DSM 16790 / HBSQ001).